The chain runs to 58 residues: Large ribosomal subunit protein bL32c (58 aa).

Residues 1–19 show a composition bias toward basic residues; sequence MAVPKKRKSKMKTRLRKAQ. The disordered stretch occupies residues 1-25; the sequence is MAVPKKRKSKMKTRLRKAQWKSEAS.

It belongs to the bacterial ribosomal protein bL32 family.

The protein resides in the plastid. It localises to the chloroplast. The protein is Large ribosomal subunit protein bL32c (rpl32) of Chlorella vulgaris (Green alga).